Reading from the N-terminus, the 483-residue chain is tRNA sulfurtransferase (483 aa).

A THUMP domain is found at 63–167 (GQLIDMLART…DDQVYLVTKK (105 aa)). Residues 185-186 (LI), K267, G289, and Q298 contribute to the ATP site. C346 and C457 are joined by a disulfide. Residues 405–483 (LPVSAKVIDI…GYTNVGVYRP (79 aa)) form the Rhodanese domain. Catalysis depends on C457, which acts as the Cysteine persulfide intermediate.

Belongs to the ThiI family.

It is found in the cytoplasm. It carries out the reaction [ThiI sulfur-carrier protein]-S-sulfanyl-L-cysteine + a uridine in tRNA + 2 reduced [2Fe-2S]-[ferredoxin] + ATP + H(+) = [ThiI sulfur-carrier protein]-L-cysteine + a 4-thiouridine in tRNA + 2 oxidized [2Fe-2S]-[ferredoxin] + AMP + diphosphate. It catalyses the reaction [ThiS sulfur-carrier protein]-C-terminal Gly-Gly-AMP + S-sulfanyl-L-cysteinyl-[cysteine desulfurase] + AH2 = [ThiS sulfur-carrier protein]-C-terminal-Gly-aminoethanethioate + L-cysteinyl-[cysteine desulfurase] + A + AMP + 2 H(+). It participates in cofactor biosynthesis; thiamine diphosphate biosynthesis. In terms of biological role, catalyzes the ATP-dependent transfer of a sulfur to tRNA to produce 4-thiouridine in position 8 of tRNAs, which functions as a near-UV photosensor. Also catalyzes the transfer of sulfur to the sulfur carrier protein ThiS, forming ThiS-thiocarboxylate. This is a step in the synthesis of thiazole, in the thiamine biosynthesis pathway. The sulfur is donated as persulfide by IscS. This is tRNA sulfurtransferase from Saccharophagus degradans (strain 2-40 / ATCC 43961 / DSM 17024).